The primary structure comprises 124 residues: MPTISQLVGSERKRLTKKTKSPALKACPERRGVCTRVYTSTPKKPNSALRKVARVRLTSGFEVTAYIPGIGHNLQEHSVVLLRGGRVKDLPGVRYHIIRGTLDTAGVKDRRQSRSKYGAKAPKD.

Residues 1 to 26 (MPTISQLVGSERKRLTKKTKSPALKA) form a disordered region. Position 89 is a 3-methylthioaspartic acid (aspartate 89). The interval 104-124 (TAGVKDRRQSRSKYGAKAPKD) is disordered.

The protein belongs to the universal ribosomal protein uS12 family. Part of the 30S ribosomal subunit. Contacts proteins S8 and S17. May interact with IF1 in the 30S initiation complex.

Functionally, with S4 and S5 plays an important role in translational accuracy. In terms of biological role, interacts with and stabilizes bases of the 16S rRNA that are involved in tRNA selection in the A site and with the mRNA backbone. Located at the interface of the 30S and 50S subunits, it traverses the body of the 30S subunit contacting proteins on the other side and probably holding the rRNA structure together. The combined cluster of proteins S8, S12 and S17 appears to hold together the shoulder and platform of the 30S subunit. The protein is Small ribosomal subunit protein uS12 of Prochlorococcus marinus (strain MIT 9215).